The sequence spans 459 residues: MKMKPPVEKNEYYDVTFEDLTHEGAGVAKVQGFPIFVPNALPEEKAQIKVTRVKKGFAFGRLIELKEESPHRTDAPCPIYKQCGGCQLQHMTYEGQLLFKQKQVKDVLERIGKLDLSKVTVHPTLGMEDPWNYRNKAQVPVGEREGGLVAGFYQQRSHDIIDMSACLIQQSKNDEAVQAVKDICANYGVKAYNEERHKGWLRHIMVRYGVVTGEMMIVFITRTSDFPHKAKIIEDITAQFPHVKSIVQNINPNKTNVIFGNETNVIWGEEYIYDLIGDVKFAISARSFYQVNPEQTKVLYDKALEYAELQGEETVIDAYCGIGTISLFLAKQAKKVYGVEIVPEAIEDAKRNAELNGNTNAEFAVGEAETVIPKWYEEGITADTLVVDPPRKGCDEALLRTIVEMKPKRVVYVSCNPGTLARDLRVLEDGGYVTREVQPVDMFPHTNHVECCVLIKLKE.

The 59-residue stretch at 6-64 (PVEKNEYYDVTFEDLTHEGAGVAKVQGFPIFVPNALPEEKAQIKVTRVKKGFAFGRLIE) folds into the TRAM domain. [4Fe-4S] cluster-binding residues include cysteine 77, cysteine 83, cysteine 86, and cysteine 166. The S-adenosyl-L-methionine site is built by glutamine 290, tyrosine 319, glutamate 340, and aspartate 388. Cysteine 415 serves as the catalytic Nucleophile.

It belongs to the class I-like SAM-binding methyltransferase superfamily. RNA M5U methyltransferase family.

The enzyme catalyses uridine(747) in 23S rRNA + S-adenosyl-L-methionine = 5-methyluridine(747) in 23S rRNA + S-adenosyl-L-homocysteine + H(+). It catalyses the reaction uridine(1939) in 23S rRNA + S-adenosyl-L-methionine = 5-methyluridine(1939) in 23S rRNA + S-adenosyl-L-homocysteine + H(+). Its function is as follows. Catalyzes the formation of 5-methyl-uridine at positions 747 (m5U747) and 1939 (m5U1939) in 23S rRNA. In Bacillus subtilis (strain 168), this protein is 23S rRNA (uracil-C(5))-methyltransferase RlmCD (rlmCD).